We begin with the raw amino-acid sequence, 469 residues long: Cysteine protease ATG4D (469 aa).

The span at 1–29 shows a compositional bias: polar residues; sequence MNSVSPLATQYGSPKGSQQMENRSTQSGG. The disordered stretch occupies residues 1–41; it reads MNSVSPLATQYGSPKGSQQMENRSTQSGGHEQRKMGHQDAT. Cys-131 acts as the Nucleophile in catalysis. The tract at residues 169 to 191 is disordered; that stretch reads IRSSSPPSMPLSSLATGHSAGDY. A compositionally biased stretch (low complexity) spans 171–182; the sequence is SSSPPSMPLSSL. Catalysis depends on residues Asp-356 and His-358. The interval 436 to 469 is disordered; the sequence is QEYAEGPQSSSHPPVCRKKGPLVKRPSSDEFEFL.

This sequence belongs to the peptidase C54 family.

Its subcellular location is the cytoplasm. The enzyme catalyses [protein]-C-terminal L-amino acid-glycyl-phosphatidylethanolamide + H2O = [protein]-C-terminal L-amino acid-glycine + a 1,2-diacyl-sn-glycero-3-phosphoethanolamine. It catalyses the reaction [protein]-C-terminal L-amino acid-glycyl-phosphatidylserine + H2O = [protein]-C-terminal L-amino acid-glycine + a 1,2-diacyl-sn-glycero-3-phospho-L-serine. Its function is as follows. Cysteine protease that plays a key role in autophagy by mediating both proteolytic activation and delipidation of ATG8 family proteins. The protease activity is required for proteolytic activation of ATG8 family proteins to reveal a C-terminal glycine. Exposure of the glycine at the C-terminus is essential for ATG8 proteins conjugation to phosphatidylethanolamine (PE) and insertion to membranes, which is necessary for autophagy. In addition to the protease activity, also mediates delipidation of ATG8 family proteins. Catalyzes delipidation of PE-conjugated forms of ATG8 proteins during macroautophagy. Also involved in non-canonical autophagy, a parallel pathway involving conjugation of ATG8 proteins to single membranes at endolysosomal compartments, by catalyzing delipidation of ATG8 proteins conjugated to phosphatidylserine (PS). The chain is Cysteine protease ATG4D from Xenopus laevis (African clawed frog).